We begin with the raw amino-acid sequence, 192 residues long: uncharacterized protein (192 aa).

The Nudix hydrolase domain maps to 29–160 (HRQAAVLIPI…PLDIYRRGDS (132 aa)). Residues 67-89 (GAVDDTDTSVIAAALREAEEEVA) carry the Nudix box motif. Residues E83 and E87 each coordinate Mg(2+).

Belongs to the Nudix hydrolase family. PCD1 subfamily. The cofactor is Mn(2+). Mg(2+) serves as cofactor.

Its function is as follows. Probably mediates the hydrolysis of some nucleoside diphosphate derivatives. This is an uncharacterized protein from Escherichia coli O7:K1 (strain IAI39 / ExPEC).